The following is a 263-amino-acid chain: N-acetylgalactosamine permease IID component (263 aa).

The region spanning Ser-3–Leu-263 is the PTS EIID domain. Helical transmembrane passes span Leu-61 to Met-81, Leu-98 to Met-118, Leu-131 to Trp-151, Thr-178 to Val-198, Phe-215 to Phe-235, and Pro-243 to Leu-263.

The protein resides in the cell inner membrane. Functionally, the phosphoenolpyruvate-dependent sugar phosphotransferase system (PTS), a major carbohydrate active -transport system, catalyzes the phosphorylation of incoming sugar substrates concomitant with their translocation across the cell membrane. This system is involved in N-acetylgalactosamine transport. The chain is N-acetylgalactosamine permease IID component (agaD) from Escherichia coli (strain K12).